We begin with the raw amino-acid sequence, 704 residues long: Ion-translocating oxidoreductase complex subunit C (704 aa).

2 consecutive 4Fe-4S ferredoxin-type domains span residues 368-397 and 407-436; these read MGAP…QQLY and KATA…VQYF. [4Fe-4S] cluster contacts are provided by C377, C380, C383, C387, C416, C419, C422, and C426. The tract at residues 534 to 682 is disordered; it reads QARAKQAAHP…AEPADPRKAA (149 aa).

The protein belongs to the 4Fe4S bacterial-type ferredoxin family. RnfC subfamily. The complex is composed of six subunits: RsxA, RsxB, RsxC, RsxD, RsxE and RsxG. Requires [4Fe-4S] cluster as cofactor.

The protein resides in the cell inner membrane. In terms of biological role, part of a membrane-bound complex that couples electron transfer with translocation of ions across the membrane. Required to maintain the reduced state of SoxR. The polypeptide is Ion-translocating oxidoreductase complex subunit C (Salmonella enteritidis PT4 (strain P125109)).